We begin with the raw amino-acid sequence, 599 residues long: E3 ubiquitin-protein ligase Kcmf1 (599 aa).

The ZZ-type zinc-finger motif lies at 4–60 (HEGVSCDSCLKSNFNGRRYKCLICYDYDLCADCYEDGVTSTRHLVEHPMQCILTRSD). 8 residues coordinate Zn(2+): cysteine 9, cysteine 12, cysteine 24, cysteine 27, cysteine 33, cysteine 36, histidine 46, and histidine 50. The C2H2-type zinc-finger motif lies at 78–101 (FTCPYCKKMGFSDATLLEHVSAEH). 5 disordered regions span residues 155–193 (HGGGVRRIPGRTLGGPRTRRSNMHFSSSSGLSALSPSGR), 229–253 (DRQQVTASRQIDRLPRRAHPIVSTS), 269–294 (GSGGSGAVGSGSGGGSGATAPPNLRT), 466–486 (VEQQQQQQQLQPAMVRQVNQM), and 507–599 (NTTQ…PDTR). Composition is skewed to low complexity over residues 160–170 (RRIPGRTLGGP) and 180–192 (SSSSGLSALSPSG). Residues 269–285 (GSGGSGAVGSGSGGGSG) show a composition bias toward gly residues. Residues 513 to 532 (GTGGLGGAGATAAPGGGASG) show a composition bias toward gly residues. The segment covering 538–547 (TADRGIERRS) has biased composition (basic and acidic residues). A compositionally biased stretch (low complexity) spans 559-593 (SQQPQQQQQSTANPAASQQKYKQNASAATAAGNTN).

Belongs to the KCMF1 family. As to quaternary structure, interacts with poe.

The enzyme catalyses S-ubiquitinyl-[E2 ubiquitin-conjugating enzyme]-L-cysteine + [acceptor protein]-L-lysine = [E2 ubiquitin-conjugating enzyme]-L-cysteine + N(6)-ubiquitinyl-[acceptor protein]-L-lysine.. Its function is as follows. Has intrinsic E3 ubiquitin ligase activity and promotes ubiquitination. Involved in the negative regulation of the Ras/MAPK signaling pathway in the wing by acting with the E2 enzyme Unc6 and the putative E3 ligases poe and Ufd4 to mediate the ubiquitination and proteasomal degradation of rl/MAPK. The chain is E3 ubiquitin-protein ligase Kcmf1 from Drosophila melanogaster (Fruit fly).